The primary structure comprises 256 residues: MALAKRIIPCLDVDNGRVVKGVKFENIRDAGDPVEIARRYDEQGADEITFLDITASVDGRDTTLHTVERMASQVFIPLTVGGGVRSVQDIRNLLNAGADKVSINTAAVFNPEFVGEAADRFGSQCIVVAIDAKKVSAPGEAPRWEIFTHGGRKPTGLDAVLWAKKMEDLGAGEILLTSMDQDGVKSGYDLGVTRAISEAVNVPVIASGGVGNLEHLAAGILEGKADAVLAASIFHFGEYTVPEAKAYLASRGIVVR.

Residues D12 and D131 contribute to the active site.

Belongs to the HisA/HisF family. Heterodimer of HisH and HisF.

It localises to the cytoplasm. The enzyme catalyses 5-[(5-phospho-1-deoxy-D-ribulos-1-ylimino)methylamino]-1-(5-phospho-beta-D-ribosyl)imidazole-4-carboxamide + L-glutamine = D-erythro-1-(imidazol-4-yl)glycerol 3-phosphate + 5-amino-1-(5-phospho-beta-D-ribosyl)imidazole-4-carboxamide + L-glutamate + H(+). The protein operates within amino-acid biosynthesis; L-histidine biosynthesis; L-histidine from 5-phospho-alpha-D-ribose 1-diphosphate: step 5/9. Its function is as follows. IGPS catalyzes the conversion of PRFAR and glutamine to IGP, AICAR and glutamate. The HisF subunit catalyzes the cyclization activity that produces IGP and AICAR from PRFAR using the ammonia provided by the HisH subunit. This is Imidazole glycerol phosphate synthase subunit hisF1 (hisF1) from Pseudomonas aeruginosa (strain ATCC 15692 / DSM 22644 / CIP 104116 / JCM 14847 / LMG 12228 / 1C / PRS 101 / PAO1).